The following is a 918-amino-acid chain: Calcium-transporting ATPase type 2C member 1 (918 aa).

Over 1–78 the chain is Cytoplasmic; the sequence is MKVARFQKIP…EPLWKKYISQ (78 aa). A helical membrane pass occupies residues 79 to 95; the sequence is FKNPLIMLLLASAVISI. Residues 96–99 lie on the Extracellular side of the membrane; it reads LMRQ. A helical membrane pass occupies residues 100-121; sequence FDDAVSITVAIVIVVTVAFVQE. Topologically, residues 122 to 262 are cytoplasmic; sequence YRSEKSLEEL…PKTPLQKSMD (141 aa). Residues 263 to 282 form a helical membrane-spanning segment; sequence LLGKQLSFYSFGIIGIIMLV. Residues 283 to 294 lie on the Extracellular side of the membrane; the sequence is GWLLGKDILEMF. A helical transmembrane segment spans residues 295-316; the sequence is TISVSLAVAAIPEGLPIVVTVT. The Cytoplasmic segment spans residues 317–699; it reads LALGVMRMVK…EGKGIYNNIK (383 aa). The active-site 4-aspartylphosphate intermediate is the Asp-349. Mg(2+)-binding residues include Asp-643 and Asp-647. Residues 700–722 traverse the membrane as a helical segment; it reads NFVRFQLSTSIAALTLISLATLM. The Extracellular segment spans residues 723-727; sequence NFPNP. Residues 728–751 traverse the membrane as a helical segment; it reads LNAMQILWINIIMDGPPAQSLGVE. Over 752–775 the chain is Cytoplasmic; that stretch reads PVDKDVIRKPPRNWKDSILTKNLI. The helical transmembrane segment at 776 to 794 threads the bilayer; that stretch reads LKILVSSIIIVCGTLFVFW. Residues 795–801 are Extracellular-facing; sequence RELRDNV. A helical transmembrane segment spans residues 802–827; the sequence is ITPRDTTMTFTCFVFFDMFNALSSRS. Topologically, residues 828-842 are cytoplasmic; sequence QTKSVFEIGLCSNKM. Residues 843–862 traverse the membrane as a helical segment; it reads FCYAVLGSIMGQLLVIYFPP. The Extracellular segment spans residues 863-875; it reads LQKVFQTESLSIL. A helical transmembrane segment spans residues 876 to 892; the sequence is DLLFLLGLTSSVCIVSE. The Cytoplasmic segment spans residues 893 to 918; that stretch reads IIKKVERSREKVQKNAGSASSSFLEV.

This sequence belongs to the cation transport ATPase (P-type) (TC 3.A.3) family. Type IIA subfamily. In terms of assembly, monomer. Homodimer. Expressed in hippocampal neurons in the CA3 region of the Amon's horn (at protein level). Expressed in brain, heart, lung, stomach, liver, colon and mammary gland.

The protein localises to the golgi apparatus. It is found in the trans-Golgi network membrane. It localises to the golgi stack membrane. The catalysed reaction is Ca(2+)(in) + ATP + H2O = Ca(2+)(out) + ADP + phosphate + H(+). The enzyme catalyses Mn(2+)(in) + ATP + H2O = Mn(2+)(out) + ADP + phosphate + H(+). Functionally, ATP-driven pump that supplies the Golgi apparatus with Ca(2+) and Mn(2+) ions, both essential cofactors for processing and trafficking of newly synthesized proteins in the secretory pathway. Within a catalytic cycle, acquires Ca(2+) or Mn(2+) ions on the cytoplasmic side of the membrane and delivers them to the lumenal side. The transfer of ions across the membrane is coupled to ATP hydrolysis and is associated with a transient phosphorylation that shifts the pump conformation from inward-facing to outward-facing state. Plays a primary role in the maintenance of Ca(2+) homeostasis in the trans-Golgi compartment with a functional impact on Golgi and post-Golgi protein sorting as well as a structural impact on cisternae morphology. Responsible for loading the Golgi stores with Ca(2+) ions in keratinocytes, contributing to keratinocyte differentiation and epidermis integrity. Participates in Ca(2+) and Mn(2+) ions uptake into the Golgi store of hippocampal neurons and regulates protein trafficking required for neural polarity. May also play a role in the maintenance of Ca(2+) and Mn(2+) homeostasis and signaling in the cytosol while preventing cytotoxicity. The sequence is that of Calcium-transporting ATPase type 2C member 1 from Mus musculus (Mouse).